Here is a 224-residue protein sequence, read N- to C-terminus: Peroxiredoxin-6 (224 aa).

In terms of domain architecture, Thioredoxin spans 5–169; the sequence is LLLGDEAPNF…ILRVIISLQL (165 aa). Residues 31 to 40 form a required and sufficient for targeting to lysosomes and lamellar bodies region; it reads DSWGILFSHP. Residue T44 is modified to Phosphothreonine. C47 serves as the catalytic Cysteine sulfenic acid (-SOH) intermediate; for peroxidase activity. K63 is subject to N6-acetyllysine. Y89 is modified (phosphotyrosine). Catalysis depends on D140, which acts as the For phospholipase activity. Position 177 is a phosphothreonine; by MAPK (T177). K209 is modified (N6-acetyllysine; alternate). K209 is modified (N6-succinyllysine; alternate).

It belongs to the peroxiredoxin family. Prx6 subfamily. Homodimer. Interacts with GSTP1; mediates PRDX6 glutathionylation and regeneration. Interacts with APEX1. Interacts with STH. May interact with FAM168B. May interact with HTR2A. Post-translationally, irreversibly inactivated by overoxidation of Cys-47 to sulfinic acid (Cys-SO(2)H) and sulfonic acid (Cys-SO(3)H) forms upon oxidative stress. In terms of processing, phosphorylation at Thr-177 by MAP kinases increases the phospholipase activity of the enzyme. The phosphorylated form exhibits a greater lysophosphatidylcholine acyltransferase activity compared to the non-phosphorylated form.

It localises to the cytoplasm. The protein resides in the lysosome. It catalyses the reaction a hydroperoxide + 2 glutathione = an alcohol + glutathione disulfide + H2O. The enzyme catalyses a 1,2-diacyl-sn-glycero-3-phosphocholine + H2O = a 1-acyl-sn-glycero-3-phosphocholine + a fatty acid + H(+). It carries out the reaction a 1-acyl-sn-glycero-3-phosphocholine + an acyl-CoA = a 1,2-diacyl-sn-glycero-3-phosphocholine + CoA. The catalysed reaction is 1-hexadecanoyl-sn-glycero-3-phosphocholine + hexadecanoyl-CoA = 1,2-dihexadecanoyl-sn-glycero-3-phosphocholine + CoA. It catalyses the reaction 1,2-dihexadecanoyl-sn-glycero-3-phosphocholine + H2O = 1-hexadecanoyl-sn-glycero-3-phosphocholine + hexadecanoate + H(+). Functionally, thiol-specific peroxidase that catalyzes the reduction of hydrogen peroxide and organic hydroperoxides to water and alcohols, respectively. Can reduce H(2)O(2) and short chain organic, fatty acid, and phospholipid hydroperoxides. Also has phospholipase activity, and can therefore either reduce the oxidized sn-2 fatty acyl group of phospholipids (peroxidase activity) or hydrolyze the sn-2 ester bond of phospholipids (phospholipase activity). These activities are dependent on binding to phospholipids at acidic pH and to oxidized phospholipds at cytosolic pH. Plays a role in cell protection against oxidative stress by detoxifying peroxides and in phospholipid homeostasis. Exhibits acyl-CoA-dependent lysophospholipid acyltransferase which mediates the conversion of lysophosphatidylcholine (1-acyl-sn-glycero-3-phosphocholine or LPC) into phosphatidylcholine (1,2-diacyl-sn-glycero-3-phosphocholine or PC). Shows a clear preference for LPC as the lysophospholipid and for palmitoyl CoA as the fatty acyl substrate. The chain is Peroxiredoxin-6 (PRDX6) from Sus scrofa (Pig).